The chain runs to 374 residues: Translocating chain-associated membrane protein 1 (374 aa).

Residues 1–29 (MAIRKKSTKSPPVLSHEFVLQNHADIVSC) lie on the Cytoplasmic side of the membrane. The helical transmembrane segment at 30 to 50 (VAMVFLLGLMFEITAKASIIF) threads the bilayer. The Lumenal portion of the chain corresponds to 51 to 76 (VTLQYNVTLPATEEQATESVSLYYYG). Asparagine 56 is a glycosylation site (N-linked (GlcNAc...) asparagine). A helical transmembrane segment spans residues 77–97 (IKDLATVFFYMLVAIIIHAVI). Over 98–121 (QEYMLDKINRRMHFSKTKHSKFNE) the chain is Cytoplasmic. A TLC domain is found at 117–326 (SKFNESGQLS…NFQLRRWREH (210 aa)). A helical transmembrane segment spans residues 122–142 (SGQLSAFYLFACVWGTFILIS). Over 143-159 (ENYISDPTILWRAYPHN) the chain is Lumenal. Residues 160–180 (LMTFQMKFFYISQLAYWLHAF) form a helical membrane-spanning segment. Residues 181-192 (PELYFQKTKKED) lie on the Cytoplasmic side of the membrane. Residues 193 to 213 (IPRQLVYIGLYLFHIAGAYLL) traverse the membrane as a helical segment. Over 214–217 (NLNH) the chain is Lumenal. The helical transmembrane segment at 218-238 (LGLVLLVLHYFVEFLFHISRL) threads the bilayer. The Cytoplasmic segment spans residues 239-251 (FYFSNEKYQKGFS). A helical membrane pass occupies residues 252 to 272 (LWAVLFVLGRLLTLILSVLTV). Over 273–297 (GFGLARAENQKLDFSTGNFNVLAVR) the chain is Lumenal. A helical transmembrane segment spans residues 298–318 (IAVLASICVTQAFMMWKFINF). Over 319–374 (QLRRWREHSAFQAPAVKKKPTVTKGRSSKKGTENGVNGTLTSNVADSPRNKKEKSS) the chain is Cytoplasmic. A compositionally biased stretch (basic residues) spans 334–347 (VKKKPTVTKGRSSK). Residues 334–374 (VKKKPTVTKGRSSKKGTENGVNGTLTSNVADSPRNKKEKSS) form a disordered region. Positions 352 to 363 (NGVNGTLTSNVA) are enriched in polar residues. Serine 365 carries the post-translational modification Phosphoserine.

Belongs to the TRAM family. Interacts with SEC61B. May interact with Derlin-1/DERL1. In terms of assembly, (Microbial infection) Interacts with human cytomegalovirus/HHV-5 proteins US2 and US11. Post-translationally, N-glycosylated.

The protein localises to the endoplasmic reticulum membrane. Involved in the translocation of nascent protein chains into or through the endoplasmic reticulum (ER) membrane by facilitating the proper chain positioning at the SEC61 channel. Regulates the exposure of nascent secretory protein chain to the cytosol during translocation into the ER. May affect the phospholipid bilayer in the vicinity of the lateral gate of the SEC61 channel, thereby facilitating ER protein transport. Intimately associates with transmembrane (TM) domain of nascent membrane proteins during the entire integration process into the ER membrane. Associates with the second TM domain of G-protein-coupled receptor opsin/OPSD nascent chain in the ER membrane, which may facilitate its integration into the membrane. Under conditions of ER stress, participates in the disposal of misfolded ER membrane proteins during the unfolded protein response (UPR), an integrated stress response (ISR) pathway, by selectively retrotranslocating misfolded ER-membrane proteins from the ER into the cytosol where they are ubiquitinated and degraded by the proteasome. Functionally, (Microbial infection) In case of cytomegalovirus infection, participates in US2- and US11-mediated ER-to-cytosol retrotranslocation and subsequent degradation of major histocompatibility complex (MHC) class I heavy chains, thereby decreasing the immune detection by cytotoxic T-cells. This Homo sapiens (Human) protein is Translocating chain-associated membrane protein 1.